The chain runs to 200 residues: Probable molybdenum cofactor guanylyltransferase (200 aa).

GTP is bound by residues 9–11 (LAG), K21, D69, and D100. A Mg(2+)-binding site is contributed by D100.

The protein belongs to the MobA family. Requires Mg(2+) as cofactor.

The protein resides in the cytoplasm. It carries out the reaction Mo-molybdopterin + GTP + H(+) = Mo-molybdopterin guanine dinucleotide + diphosphate. Its function is as follows. Transfers a GMP moiety from GTP to Mo-molybdopterin (Mo-MPT) cofactor (Moco or molybdenum cofactor) to form Mo-molybdopterin guanine dinucleotide (Mo-MGD) cofactor. The protein is Probable molybdenum cofactor guanylyltransferase of Bacillus cereus (strain G9842).